A 103-amino-acid chain; its full sequence is uncharacterized protein (103 aa).

3 helical membrane-spanning segments follow: residues 12 to 34, 49 to 66, and 79 to 101; these read GFSW…LTIS, TLMS…ALIA, and FARG…VAGG.

It is found in the cell membrane. This is an uncharacterized protein from Pasteurella multocida (strain Pm70).